Here is a 346-residue protein sequence, read N- to C-terminus: Methylthioribose-1-phosphate isomerase (346 aa).

Substrate contacts are provided by residues 44-46 (RGA), R87, and Q194. D235 functions as the Proton donor in the catalytic mechanism. 245 to 246 (NK) provides a ligand contact to substrate.

Belongs to the eIF-2B alpha/beta/delta subunits family. MtnA subfamily.

The catalysed reaction is 5-(methylsulfanyl)-alpha-D-ribose 1-phosphate = 5-(methylsulfanyl)-D-ribulose 1-phosphate. The protein operates within amino-acid biosynthesis; L-methionine biosynthesis via salvage pathway; L-methionine from S-methyl-5-thio-alpha-D-ribose 1-phosphate: step 1/6. Catalyzes the interconversion of methylthioribose-1-phosphate (MTR-1-P) into methylthioribulose-1-phosphate (MTRu-1-P). This chain is Methylthioribose-1-phosphate isomerase, found in Desulforamulus reducens (strain ATCC BAA-1160 / DSM 100696 / MI-1) (Desulfotomaculum reducens).